The primary structure comprises 203 residues: Synaptosomal-associated protein 25-B (203 aa).

The span at 1–11 (MADEADMRNEL) shows a compositional bias: basic and acidic residues. The disordered stretch occupies residues 1 to 25 (MADEADMRNELTDMQARADQLGDES). T-SNARE coiled-coil homology domains lie at 19 to 81 (DQLG…LTDL) and 137 to 199 (DARE…ATKM).

Belongs to the SNAP-25 family.

It is found in the synapse. Its subcellular location is the synaptosome. The protein resides in the cell membrane. May play an important role in the synaptic function of specific neuronal systems. Associates with proteins involved in vesicle docking and membrane fusion. The polypeptide is Synaptosomal-associated protein 25-B (snap25b) (Carassius auratus (Goldfish)).